Consider the following 529-residue polypeptide: Peptide chain release factor 3 (529 aa).

Positions 11 to 280 (ATRRTFAIIS…GLVQWAPPPQ (270 aa)) constitute a tr-type G domain. GTP-binding positions include 20-27 (SHPDAGKT), 88-92 (DTPGH), and 142-145 (NKLD).

It belongs to the TRAFAC class translation factor GTPase superfamily. Classic translation factor GTPase family. PrfC subfamily.

It is found in the cytoplasm. Its function is as follows. Increases the formation of ribosomal termination complexes and stimulates activities of RF-1 and RF-2. It binds guanine nucleotides and has strong preference for UGA stop codons. It may interact directly with the ribosome. The stimulation of RF-1 and RF-2 is significantly reduced by GTP and GDP, but not by GMP. The polypeptide is Peptide chain release factor 3 (Alcanivorax borkumensis (strain ATCC 700651 / DSM 11573 / NCIMB 13689 / SK2)).